The following is a 99-amino-acid chain: MNLYDVIKKPVITESSMGQLEAGKYVFEVDTRAHKLLIKQAVEAAFEGVKVANVNTINVKPKTKRVGRYVGRTNKVKKAIITLAADSKAIELFATADAE.

Belongs to the universal ribosomal protein uL23 family. In terms of assembly, part of the 50S ribosomal subunit. Contacts protein L29, and trigger factor when it is bound to the ribosome.

Its function is as follows. One of the early assembly proteins it binds 23S rRNA. One of the proteins that surrounds the polypeptide exit tunnel on the outside of the ribosome. Forms the main docking site for trigger factor binding to the ribosome. The polypeptide is Large ribosomal subunit protein uL23 (Streptococcus suis (strain 98HAH33)).